The following is a 501-amino-acid chain: MVIVYFILILTGVIMVHELGHYLFARLFKVKVLEFAIGFGPKIFSVKGRETTFRLNVFPIGGYVRMLGEEGEEIADEEEKEKSFYAKPAWQRFLITLAGPLFSILAGYLLFLPITLNWGIALPGIDEVVPGSPAEEAGLRRGDIIYSINDKIAFDTSIISNEIQKGLPVELVIIRNGEKKSLRLTPRMYPETYEFVLESAEGTPSGKLVSVNGNRDTSVLKEFVNEYVVLEFEGGTVKGILKQFNEIPARYMIGISFSGLAPVFKKDIYFKEGLFVFKKGDRIVRVEDQEIEGWQDLVVLYQRLTLGKDTMIVSLQGENIEWWRGLSGSVRVVIKRGDSTIEKNVEASFLKNILETPDLLEMGVPRYKPKNPLEAVNLSVKACNYVLLTTASSLKNFFRNVQTGQIVGVVGLAGVISAASKTGLEAVLTVVAVITISLGVLNLLPLPALDGGRIIFSLVEMITRKKLNPQVENIIHFLGFIFLMILFLYITFLDIGRMMGI.

H17 serves as a coordination point for Zn(2+). E18 is an active-site residue. A Zn(2+)-binding site is contributed by H21. The next 4 membrane-spanning stretches (helical) occupy residues 93–115 (FLIT…LPIT), 401–420 (VQTG…SAAS), 427–449 (VLTV…LPAL), and 474–496 (IIHF…LDIG). One can recognise a PDZ domain in the interval 96–180 (TLAGPLFSIL…LVIIRNGEKK (85 aa)).

This sequence belongs to the peptidase M50B family. Zn(2+) serves as cofactor.

Its subcellular location is the cell inner membrane. The protein is Putative zinc metalloprotease TM_0890 of Thermotoga maritima (strain ATCC 43589 / DSM 3109 / JCM 10099 / NBRC 100826 / MSB8).